The following is a 434-amino-acid chain: Putative peptidase B (434 aa).

Residues Lys-198 and Asp-203 each contribute to the Mn(2+) site. The active site involves Lys-210. Mn(2+)-binding residues include Asp-221, Asp-280, and Glu-282. The active site involves Arg-284.

It belongs to the peptidase M17 family. In terms of assembly, homohexamer. The cofactor is Mn(2+).

It localises to the cytoplasm. It catalyses the reaction Release of an N-terminal amino acid, Xaa, from a peptide or arylamide. Xaa is preferably Glu or Asp but may be other amino acids, including Leu, Met, His, Cys and Gln.. Functionally, probably plays an important role in intracellular peptide degradation. The protein is Putative peptidase B of Haemophilus influenzae (strain ATCC 51907 / DSM 11121 / KW20 / Rd).